A 207-amino-acid chain; its full sequence is Probable flagellin 2 (207 aa).

Residues 1 to 14 constitute a propeptide that is removed on maturation; that stretch reads MRVGSRKLRRDEKG.

It belongs to the archaeal flagellin family.

It is found in the archaeal flagellum. Its function is as follows. Flagellin is the subunit protein which polymerizes to form the filaments of archaeal flagella. The polypeptide is Probable flagellin 2 (flaB2) (Archaeoglobus fulgidus (strain ATCC 49558 / DSM 4304 / JCM 9628 / NBRC 100126 / VC-16)).